A 628-amino-acid polypeptide reads, in one-letter code: Basal cell adhesion molecule (628 aa).

Residues M1–A31 form the signal peptide. 2 Ig-like V-type domains span residues E32–K142 and P150–G253. Residues E32–A547 are Extracellular-facing. 3 disulfides stabilise this stretch: C53/C125, C172/C237, and C291/C337. 3 consecutive Ig-like C2-type domains span residues P254–E355, E355–R441, and P448–G538. 3 N-linked (GlcNAc...) asparagine glycosylation sites follow: N321, N330, and N378. Intrachain disulfides connect C384-C424 and C473-C522. Residues G548–F568 form a helical membrane-spanning segment. The Cytoplasmic portion of the chain corresponds to Y569–C628. The disordered stretch occupies residues C580 to C628. S596, S598, S600, and S621 each carry phosphoserine. Residues A613–C628 show a composition bias toward gly residues.

In terms of assembly, homodimer. Interacts with ITGA4:ITGB1. Interacts with spectrins SPTA1 and SPTB1. In terms of processing, epinephrine-stimulated phosphorylation of Ser-621 by PKA enhances adhesion to laminin. Ser-621 can also be phosphorylated by AKT1.

Its subcellular location is the cell membrane. In terms of biological role, transmembrane glycoprotein that functions as both a receptor and an adhesion molecule playing a crucial role in cell adhesion, motility, migration and invasion. Extracellular domain enables binding to extracellular matrix proteins, such as laminin, integrin and other ligands while its intracellular domain interacts with cytoskeletal proteins like hemoglobin, facilitating cell signal transduction. Serves as a receptor for laminin alpha-5/LAMA5 to promote cell adhesion. Mechanistically, JAK2 induces BCAM phosphorylation and activates its adhesion to laminin by stimulating a Rap1/AKT signaling pathway in the absence of EPOR. This is Basal cell adhesion molecule (BCAM) from Bos taurus (Bovine).